Reading from the N-terminus, the 236-residue chain is Ascorbate-specific transmembrane electron transporter 1 (236 aa).

Residues 1–11 (MGLGLGVRAAP) are Cytoplasmic-facing. The helical transmembrane segment at 12 to 32 (FTYAAHALAVAAAAMVLVWSI) threads the bilayer. The 205-residue stretch at 15–219 (AAHALAVAAA…FGASVVVAAI (205 aa)) folds into the Cytochrome b561 domain. Topologically, residues 33–50 (QFRGGLAIESTNKNLIFN) are extracellular. Residues 51–71 (VHPVLMLIGYVIIGGEAIMVY) traverse the membrane as a helical segment. Histidine 52 provides a ligand contact to heme b. An L-ascorbate-binding site is contributed by 67–75 (AIMVYRVLP). At 72 to 84 (RVLPTSNHDTTKL) the chain is on the cytoplasmic side. Residues 85–105 (IHLILHGIALVLGAVGIYFAF) traverse the membrane as a helical segment. Heme b contacts are provided by histidine 86 and histidine 120. Residues 106-122 (KNHNESGIANLYSLHSW) are Extracellular-facing. 116–125 (LYSLHSWIGI) lines the monodehydro-L-ascorbate radical pocket. The helical transmembrane segment at 123-143 (IGIGTITLYGIQWIIGFVTFF) threads the bilayer. Residues 144–153 (FPGAAPNVKK) lie on the Cytoplasmic side of the membrane. The chain crosses the membrane as a helical span at residues 154–174 (GVLPWHVLFGLFVYILALANA). Histidine 159 serves as a coordination point for heme b. Residues 175 to 201 (ELGFLEKLTFLESSGLDKYGTEAFLVN) are Extracellular-facing. Residues 202 to 222 (FTALVVVLFGASVVVAAIAPV) form a helical membrane-spanning segment. At 223–236 (RLEEPQGYDPIPEN) the chain is on the cytoplasmic side.

Heme b is required as a cofactor.

The protein resides in the membrane. With respect to regulation, inhibited by diethylpyrocarbonate. In terms of biological role, two-heme-containing cytochrome. Catalyzes ascorbate-dependent trans-membrane electron transfer by utilizing a concerted H(+)/e(-) transfer mechanism. This is Ascorbate-specific transmembrane electron transporter 1 (ZCYB) from Zea mays (Maize).